The primary structure comprises 902 residues: Probable dipeptidyl-aminopeptidase B (902 aa).

2 disordered regions span residues 1–23 and 53–72; these read MTRRRSTSGTSSRSSTDSGLSVD and DAEADVDEPFLPTSSKKLGS. At 1–78 the chain is on the cytoplasmic side; the sequence is MTRRRSTSGT…KLGSGSRTRQ (78 aa). The span at 7-21 shows a compositional bias: low complexity; that stretch reads TSGTSSRSSTDSGLS. The helical; Signal-anchor for type II membrane protein transmembrane segment at 79 to 99 threads the bilayer; sequence IFWALVILCLGGWVLALVLFL. The Vacuolar segment spans residues 100 to 902; the sequence is THGRASSQTA…VKRSVPAFAH (803 aa). 2 N-linked (GlcNAc...) asparagine glycosylation sites follow: Asn-335 and Asn-626. Ser-740 functions as the Charge relay system in the catalytic mechanism. Residues Asn-794 and Asn-799 are each glycosylated (N-linked (GlcNAc...) asparagine). Catalysis depends on charge relay system residues Asp-817 and His-850.

This sequence belongs to the peptidase S9B family.

The protein localises to the vacuole membrane. It catalyses the reaction Release of an N-terminal dipeptide, Xaa-Yaa-|-Zaa-, from a polypeptide, preferentially when Yaa is Pro, provided Zaa is neither Pro nor hydroxyproline.. In terms of biological role, type IV dipeptidyl-peptidase which removes N-terminal dipeptides sequentially from polypeptides having unsubstituted N-termini provided that the penultimate residue is proline. This chain is Probable dipeptidyl-aminopeptidase B (dapB), found in Aspergillus oryzae (strain ATCC 42149 / RIB 40) (Yellow koji mold).